The following is a 557-amino-acid chain: Beta-amylase 2, chloroplastic (557 aa).

The N-terminal 38 residues, 1–38, are a transit peptide targeting the chloroplast; the sequence is MMSLNLAHQTGAAAAVAPAAPRTAVVAAAAGTVSAPAV. 3 residues coordinate substrate: Asp135, His175, and Asp183. The active-site Proton donor is Glu267. Lys380, His385, and Thr427 together coordinate substrate. The Proton acceptor role is filled by Glu465. Substrate contacts are provided by residues 466 to 467 and Arg499; that span reads NA.

This sequence belongs to the glycosyl hydrolase 14 family.

It localises to the plastid. The protein localises to the chloroplast. It carries out the reaction Hydrolysis of (1-&gt;4)-alpha-D-glucosidic linkages in polysaccharides so as to remove successive maltose units from the non-reducing ends of the chains.. In terms of biological role, possesses beta-amylase activity in vitro. May be involved in cold resistance by mediating the accumulation of maltose upon freezing stress, thus contributing to the protection of membranes. The sequence is that of Beta-amylase 2, chloroplastic from Oryza sativa subsp. japonica (Rice).